Consider the following 389-residue polypeptide: Vacuolar protein sorting-associated protein vts1 (389 aa).

The tract at residues 149 to 335 (NPQRKAKTPS…RPSQPTKASP (187 aa)) is disordered. 3 stretches are compositionally biased toward polar residues: residues 156 to 177 (TPSN…TLPT), 184 to 219 (TNAS…SSEP), and 227 to 282 (SLSS…PESK). Over residues 294–306 (TSITTTSTSIDPS) the composition is skewed to low complexity. Over residues 308 to 334 (AFSSKSTLATTRTNAPLSRPSQPTKAS) the composition is skewed to polar residues.

This sequence belongs to the VTA1 family. Homodimer (in cytoplasm).

Its subcellular location is the cytoplasm. The protein localises to the endosome membrane. In terms of biological role, has a role in the formation of the multivesicular body (MVB). Required for the sorting of lipids to form intralumenal vesicles and for fluid-phase transport to the vacuole. Required for sorting several plasma membrane proteins into the MVB. This chain is Vacuolar protein sorting-associated protein vts1 (vts1), found in Schizosaccharomyces pombe (strain 972 / ATCC 24843) (Fission yeast).